The sequence spans 240 residues: 4-hydroxy-tetrahydrodipicolinate reductase (240 aa).

NAD(+) is bound by residues 79–81 (ATT) and 103–106 (SANM). The active-site Proton donor/acceptor is H135. Position 136 (H136) interacts with (S)-2,3,4,5-tetrahydrodipicolinate. K139 functions as the Proton donor in the catalytic mechanism. 145-146 (GT) provides a ligand contact to (S)-2,3,4,5-tetrahydrodipicolinate.

Belongs to the DapB family.

Its subcellular location is the cytoplasm. It catalyses the reaction (S)-2,3,4,5-tetrahydrodipicolinate + NAD(+) + H2O = (2S,4S)-4-hydroxy-2,3,4,5-tetrahydrodipicolinate + NADH + H(+). The enzyme catalyses (S)-2,3,4,5-tetrahydrodipicolinate + NADP(+) + H2O = (2S,4S)-4-hydroxy-2,3,4,5-tetrahydrodipicolinate + NADPH + H(+). It functions in the pathway amino-acid biosynthesis; L-lysine biosynthesis via DAP pathway; (S)-tetrahydrodipicolinate from L-aspartate: step 4/4. In terms of biological role, catalyzes the conversion of 4-hydroxy-tetrahydrodipicolinate (HTPA) to tetrahydrodipicolinate. The chain is 4-hydroxy-tetrahydrodipicolinate reductase from Staphylococcus aureus (strain MRSA252).